Reading from the N-terminus, the 411-residue chain is Protein PHLOEM PROTEIN 2-LIKE A5 (411 aa).

One can recognise a TIR domain in the interval 20–157 (TGPQVFINFR…KWTEALFSVC (138 aa)). Residue glutamate 94 is part of the active site.

The enzyme catalyses NAD(+) + H2O = ADP-D-ribose + nicotinamide + H(+). This is Protein PHLOEM PROTEIN 2-LIKE A5 (PP2A5) from Arabidopsis thaliana (Mouse-ear cress).